The sequence spans 191 residues: Chorion class B protein Ld10 (191 aa).

The N-terminal stretch at 1 to 21 (MSAKIILVFCAQALFVQSALS) is a signal peptide.

This sequence belongs to the chorion protein family.

Its function is as follows. This protein is one of many from the eggshell of the gypsy moth. The chain is Chorion class B protein Ld10 from Lymantria dispar (Gypsy moth).